The sequence spans 140 residues: MSVERTLMLVKPDAVRRNLEGKIIAHVQEKGFKLVALKKLKLTKEQAQQFYIVHKDRPFYDELCEFMSSGPIVAMVWEGENAISRIREIMGATNPEEAEEGTLRKLYGTNVGENAVHGSDSPESAKVEIPFFFSRLEIVE.

Lysine 11, phenylalanine 59, arginine 87, threonine 93, arginine 104, and asparagine 114 together coordinate ATP. Residue histidine 117 is the Pros-phosphohistidine intermediate of the active site.

Belongs to the NDK family. As to quaternary structure, homotetramer. Requires Mg(2+) as cofactor.

It is found in the cytoplasm. It catalyses the reaction a 2'-deoxyribonucleoside 5'-diphosphate + ATP = a 2'-deoxyribonucleoside 5'-triphosphate + ADP. It carries out the reaction a ribonucleoside 5'-diphosphate + ATP = a ribonucleoside 5'-triphosphate + ADP. Functionally, major role in the synthesis of nucleoside triphosphates other than ATP. The ATP gamma phosphate is transferred to the NDP beta phosphate via a ping-pong mechanism, using a phosphorylated active-site intermediate. The polypeptide is Nucleoside diphosphate kinase (Persephonella marina (strain DSM 14350 / EX-H1)).